The sequence spans 146 residues: Hemoglobin subunit beta-1 (146 aa).

The 145-residue stretch at 2 to 146 (KWSDKERAVI…VVSALGKQYC (145 aa)) folds into the Globin domain. 2 residues coordinate heme b: His63 and His92.

This sequence belongs to the globin family. As to quaternary structure, hb1 is a heterotetramer of two alpha-1 chains and two beta-1 chains; Hb2 is a heterotetramer of two alpha-2 chains and two beta-1 chains. Red blood cells.

In terms of biological role, involved in oxygen transport from gills to the various peripheral tissues. The chain is Hemoglobin subunit beta-1 (hbb1) from Anarhichas minor (Arctic spotted wolffish).